Consider the following 346-residue polypeptide: NSSLPTNISGGTPAVSAGYLFLDIITYLVFAVTFVLGVLGNGLVIWVAGFRMTHTVTTISYLNLAVADFCFTSTLPFFMVRKAMGGHWPFGWFLCKFIFTIVDINLFGSVFLIALIALDRCVCVLHPVWTQNHRTVSLAKKVIIGPWVMALLLTLPVIIRVTTVPGKTGTVACTFNFSPWTNDPKERINVAIAMLTVRGIIRFIIGFSAPMSIVAVSYGLIATKIHKQGLIKFSRPLRVLSFVAAAFFLCWSPYQVVALIATVRIRELLQGMYKEIGIAVDVTSALAFFNSCLNPMLYVFMGQDFRERLIHALPASLERALTEDSTQTSDTATNSTLPSAEVALQA.

Asn1 and Asn7 each carry an N-linked (GlcNAc...) asparagine glycan. Topologically, residues 1–24 (NSSLPTNISGGTPAVSAGYLFLDI) are extracellular. The helical transmembrane segment at 25–47 (ITYLVFAVTFVLGVLGNGLVIWV) threads the bilayer. Topologically, residues 48–58 (AGFRMTHTVTT) are cytoplasmic. Residues 59 to 80 (ISYLNLAVADFCFTSTLPFFMV) traverse the membrane as a helical segment. Over 81–97 (RKAMGGHWPFGWFLCKF) the chain is Extracellular. A disulfide bond links Cys95 and Cys173. Residues 98–118 (IFTIVDINLFGSVFLIALIAL) form a helical membrane-spanning segment. Topologically, residues 119-137 (DRCVCVLHPVWTQNHRTVS) are cytoplasmic. Residues 138–159 (LAKKVIIGPWVMALLLTLPVII) traverse the membrane as a helical segment. The Extracellular portion of the chain corresponds to 160 to 202 (RVTTVPGKTGTVACTFNFSPWTNDPKERINVAIAMLTVRGIIR). Residues 203 to 223 (FIIGFSAPMSIVAVSYGLIAT) traverse the membrane as a helical segment. At 224–239 (KIHKQGLIKFSRPLRV) the chain is on the cytoplasmic side. The chain crosses the membrane as a helical span at residues 240–263 (LSFVAAAFFLCWSPYQVVALIATV). Over 264–282 (RIRELLQGMYKEIGIAVDV) the chain is Extracellular. A helical membrane pass occupies residues 283–302 (TSALAFFNSCLNPMLYVFMG). Topologically, residues 303–346 (QDFRERLIHALPASLERALTEDSTQTSDTATNSTLPSAEVALQA) are cytoplasmic. A disordered region spans residues 322-346 (TEDSTQTSDTATNSTLPSAEVALQA). Over residues 323 to 338 (EDSTQTSDTATNSTLP) the composition is skewed to polar residues.

Belongs to the G-protein coupled receptor 1 family. Phosphorylated; which is necessary for desensitization.

Its subcellular location is the cell membrane. Functionally, high affinity receptor for N-formyl-methionyl peptides (fMLP), which are powerful neutrophil chemotactic factors. Binding of fMLP to the receptor stimulates intracellular calcium mobilization and superoxide anion release. This response is mediated via a G-protein that activates a phosphatidylinositol-calcium second messenger system. Receptor for TAFA4, mediates its effects on chemoattracting macrophages, promoting phagocytosis and increasing ROS release. Receptor for cathepsin CTSG, leading to increased phagocyte chemotaxis. This Pan troglodytes (Chimpanzee) protein is fMet-Leu-Phe receptor (FPR1).